The chain runs to 242 residues: Protein unc-119 homolog B-A (242 aa).

Residues 1-20 (MSGSKREAALTGQPKDERKK) are compositionally biased toward basic and acidic residues. The interval 1–49 (MSGSKREAALTGQPKDERKKSGGGVINRLKARRVQGKESGTSDQSSVTP) is disordered. Over residues 38-48 (ESGTSDQSSVT) the composition is skewed to polar residues. Residue Y133 coordinates tetradecanoate.

This sequence belongs to the PDE6D/unc-119 family.

Myristoyl-binding protein that acts as a cargo adapter: specifically binds the myristoyl moiety of a subset of N-terminally myristoylated proteins and is required for their localization. Plays a key role in localization of proteins to the primary cilium membrane. This chain is Protein unc-119 homolog B-A (unc119b-a), found in Xenopus laevis (African clawed frog).